Reading from the N-terminus, the 180-residue chain is Small ribosomal subunit protein uS4 (180 aa).

The S4 RNA-binding domain occupies 103 to 174 (RRLQTLVFKK…HPERMVIEEV (72 aa)).

It belongs to the universal ribosomal protein uS4 family. Part of the 30S ribosomal subunit. Contacts protein S5. The interaction surface between S4 and S5 is involved in control of translational fidelity.

Its function is as follows. One of the primary rRNA binding proteins, it binds directly to 16S rRNA where it nucleates assembly of the body of the 30S subunit. Functionally, with S5 and S12 plays an important role in translational accuracy. This chain is Small ribosomal subunit protein uS4, found in Thermococcus sibiricus (strain DSM 12597 / MM 739).